Here is a 122-residue protein sequence, read N- to C-terminus: Small ribosomal subunit protein uS12c (122 aa).

This sequence belongs to the universal ribosomal protein uS12 family. Part of the 30S ribosomal subunit.

It localises to the plastid. It is found in the chloroplast. With S4 and S5 plays an important role in translational accuracy. Located at the interface of the 30S and 50S subunits. The chain is Small ribosomal subunit protein uS12c (rps12) from Mesostigma viride (Green alga).